Reading from the N-terminus, the 145-residue chain is uncharacterized protein (145 aa).

Positions 1 to 25 (MSENNENDGFNLDPDVKEELEETKS) are disordered. The span at 14-25 (PDVKEELEETKS) shows a compositional bias: basic and acidic residues.

This is an uncharacterized protein from His1 virus (isolate Australia/Victoria) (His1V).